The following is a 399-amino-acid chain: Argininosuccinate synthase (399 aa).

ATP contacts are provided by residues 10-18 and A38; that span reads AYSGGVDTS. Y89 contacts L-citrulline. An ATP-binding site is contributed by G119. Residues T121, N125, and D126 each coordinate L-aspartate. An L-citrulline-binding site is contributed by N125. 5 residues coordinate L-citrulline: R129, S177, S186, E262, and Y274.

Belongs to the argininosuccinate synthase family. Type 1 subfamily. As to quaternary structure, homotetramer.

The protein resides in the cytoplasm. It carries out the reaction L-citrulline + L-aspartate + ATP = 2-(N(omega)-L-arginino)succinate + AMP + diphosphate + H(+). The protein operates within amino-acid biosynthesis; L-arginine biosynthesis; L-arginine from L-ornithine and carbamoyl phosphate: step 2/3. This Picosynechococcus sp. (strain ATCC 27264 / PCC 7002 / PR-6) (Agmenellum quadruplicatum) protein is Argininosuccinate synthase.